The primary structure comprises 288 residues: ATP synthase gamma chain (288 aa).

It belongs to the ATPase gamma chain family. As to quaternary structure, F-type ATPases have 2 components, CF(1) - the catalytic core - and CF(0) - the membrane proton channel. CF(1) has five subunits: alpha(3), beta(3), gamma(1), delta(1), epsilon(1). CF(0) has three main subunits: a, b and c.

Its subcellular location is the cell membrane. Produces ATP from ADP in the presence of a proton gradient across the membrane. The gamma chain is believed to be important in regulating ATPase activity and the flow of protons through the CF(0) complex. The polypeptide is ATP synthase gamma chain (Staphylococcus epidermidis (strain ATCC 35984 / DSM 28319 / BCRC 17069 / CCUG 31568 / BM 3577 / RP62A)).